A 351-amino-acid polypeptide reads, in one-letter code: UDP-N-acetylglucosamine--N-acetylmuramyl-(pentapeptide) pyrophosphoryl-undecaprenol N-acetylglucosamine transferase (351 aa).

UDP-N-acetyl-alpha-D-glucosamine-binding positions include 13–15 (TGG), Asn-125, Arg-161, Ser-189, Ile-241, 260–265 (ALTVCE), and Gln-285.

The protein belongs to the glycosyltransferase 28 family. MurG subfamily.

It is found in the cell inner membrane. It catalyses the reaction di-trans,octa-cis-undecaprenyl diphospho-N-acetyl-alpha-D-muramoyl-L-alanyl-D-glutamyl-meso-2,6-diaminopimeloyl-D-alanyl-D-alanine + UDP-N-acetyl-alpha-D-glucosamine = di-trans,octa-cis-undecaprenyl diphospho-[N-acetyl-alpha-D-glucosaminyl-(1-&gt;4)]-N-acetyl-alpha-D-muramoyl-L-alanyl-D-glutamyl-meso-2,6-diaminopimeloyl-D-alanyl-D-alanine + UDP + H(+). The protein operates within cell wall biogenesis; peptidoglycan biosynthesis. Functionally, cell wall formation. Catalyzes the transfer of a GlcNAc subunit on undecaprenyl-pyrophosphoryl-MurNAc-pentapeptide (lipid intermediate I) to form undecaprenyl-pyrophosphoryl-MurNAc-(pentapeptide)GlcNAc (lipid intermediate II). The chain is UDP-N-acetylglucosamine--N-acetylmuramyl-(pentapeptide) pyrophosphoryl-undecaprenol N-acetylglucosamine transferase from Haemophilus influenzae (strain 86-028NP).